The sequence spans 382 residues: Histidine biosynthesis bifunctional protein HisB (382 aa).

Residues 1–190 form a histidinol-phosphatase region; sequence MQKIVFIDRD…EIYEFLRLPA (190 aa). Asp8 (nucleophile) is an active-site residue. 3 residues coordinate Mg(2+): Asp8, Asp10, and Asp129. The active-site Proton donor is the Asp10. An imidazoleglycerol-phosphate dehydratase region spans residues 191 to 382; sequence RTALVERNTK…DNLPSTKGVL (192 aa).

It in the N-terminal section; belongs to the histidinol-phosphatase family. In the C-terminal section; belongs to the imidazoleglycerol-phosphate dehydratase family. Requires Mg(2+) as cofactor.

Its subcellular location is the cytoplasm. The catalysed reaction is D-erythro-1-(imidazol-4-yl)glycerol 3-phosphate = 3-(imidazol-4-yl)-2-oxopropyl phosphate + H2O. It catalyses the reaction L-histidinol phosphate + H2O = L-histidinol + phosphate. It functions in the pathway amino-acid biosynthesis; L-histidine biosynthesis; L-histidine from 5-phospho-alpha-D-ribose 1-diphosphate: step 6/9. Its pathway is amino-acid biosynthesis; L-histidine biosynthesis; L-histidine from 5-phospho-alpha-D-ribose 1-diphosphate: step 8/9. The chain is Histidine biosynthesis bifunctional protein HisB from Spirosoma linguale (strain ATCC 33905 / DSM 74 / LMG 10896 / Claus 1).